The primary structure comprises 261 residues: uncharacterized protein (261 aa).

In terms of domain architecture, Response regulatory spans 7-122 (TAVLADDEPL…RLASCCEKLQ (116 aa)). A 4-aspartylphosphate modification is found at Asp-54. In terms of domain architecture, HTH LytTR-type spans 157–261 (LKASKGEEIH…RALQHLFKVS (105 aa)).

This is an uncharacterized protein from Vibrio cholerae serotype O1 (strain ATCC 39315 / El Tor Inaba N16961).